We begin with the raw amino-acid sequence, 156 residues long: Small ribosomal subunit protein uS7 (156 aa).

It belongs to the universal ribosomal protein uS7 family. Part of the 30S ribosomal subunit. Contacts proteins S9 and S11.

Its function is as follows. One of the primary rRNA binding proteins, it binds directly to 16S rRNA where it nucleates assembly of the head domain of the 30S subunit. Is located at the subunit interface close to the decoding center, probably blocks exit of the E-site tRNA. This chain is Small ribosomal subunit protein uS7, found in Desulfitobacterium hafniense (strain DSM 10664 / DCB-2).